Reading from the N-terminus, the 280-residue chain is Putative sugar uptake protein (280 aa).

Transmembrane regions (helical) follow at residues 4–21 (LIALIPALGWGIFSLIAG), 33–52 (MGLGTGALIIGIITAIIHPA), 56–78 (ITIFSLSLISGMFCALGQSGQFI), 91–113 (LSTGFQLIGNTLIGAIIFGEWTS), 117–136 (YLIGTLALILIIVGVSLTAI), 149–166 (IILLLFTSIGYWIYSSFP), 176–195 (LFLPQMIGIFIGSIIFLLVS), 207–229 (WLNIFSGFSYGIAAFSYIFSAQL), 233–255 (ITAFIYSQLCVIISTLGGIFFIG), and 262–279 (ELIATFVGLILIIIGAAI).

The protein belongs to the GRP transporter (TC 2.A.7.5) family.

The protein resides in the cell membrane. The sequence is that of Putative sugar uptake protein from Lactobacillus helveticus (Lactobacillus suntoryeus).